Reading from the N-terminus, the 322-residue chain is Beta-1,3-galactosyltransferase bre-5 (322 aa).

Over 1–16 (MFLCVRILKRKYHELS) the chain is Cytoplasmic. Residues 17–37 (SFQKLLIFTITIFLLWVLGVV) traverse the membrane as a helical; Signal-anchor for type II membrane protein segment. Residues 38–322 (DKFRETSFGD…YEYSQLNGFE (285 aa)) lie on the Lumenal side of the membrane. Asn-150 carries an N-linked (GlcNAc...) asparagine glycan.

It belongs to the glycosyltransferase 31 family. In terms of tissue distribution, expressed in the gut.

The protein localises to the golgi apparatus membrane. It functions in the pathway protein modification; protein glycosylation. Functionally, transfers N-acetylgalactosamine onto mannose groups of carbohydrate substrates. Required for susceptibility to pore-forming crystal toxins in conjunction with bre-1, bre-2, bre-3, and bre-4. Involved in resistance to the nematotoxic C.cinerea galectin Cgl2. The chain is Beta-1,3-galactosyltransferase bre-5 from Caenorhabditis elegans.